The chain runs to 342 residues: P2Y purinoceptor 12 (342 aa).

Over 1–27 (MQAIDNLTSAPGNTSLCTRDYKITQVL) the chain is Extracellular. Residues asparagine 6 and asparagine 13 are each glycosylated (N-linked (GlcNAc...) asparagine). Disulfide bonds link cysteine 17–cysteine 270 and cysteine 97–cysteine 175. A helical membrane pass occupies residues 28–50 (FPLLYTVLFFVGLITNSLAMRIF). At 51–61 (FQIRSKSNFII) the chain is on the cytoplasmic side. Phosphoserine occurs at positions 55 and 57. A helical transmembrane segment spans residues 62–82 (FLKNTVISDLLMILTFPFKIL). The Extracellular portion of the chain corresponds to 83-97 (SDAKLGAGPLRTFVC). Residues arginine 93, cysteine 97, and tyrosine 105 each contribute to the ADP site. The chain crosses the membrane as a helical span at residues 98–118 (QVTSVIFYFTMYISISFLGLI). At 119-142 (TIDRYQKTTRPFKTSNPKNLLGAK) the chain is on the cytoplasmic side. The chain crosses the membrane as a helical span at residues 143 to 162 (ILSVLIWAFMFLLSLPNMIL). ADP-binding positions include 156–159 (SLPN), 175–179 (CSFLK), histidine 187, and asparagine 191. Residues 163 to 185 (TNRRPRDKNVKKCSFLKSEFGLV) lie on the Extracellular side of the membrane. The helical transmembrane segment at 186–207 (WHEIVNYICQVIFWINFLIVIV) threads the bilayer. Residues 208–233 (CYTLITKELYRSYVRTRGVGKVPRKK) lie on the Cytoplasmic side of the membrane. A helical membrane pass occupies residues 234–259 (VNVKVFIIIAVFFICFVPFHFARIPY). ADP contacts are provided by residues 256 to 259 (RIPY), glutamine 263, and lysine 280. Topologically, residues 260 to 278 (TLSQTRDVFDCAAENTLFY) are extracellular. Residues 279-298 (VKESTLWLTSLNACLDPFIY) traverse the membrane as a helical segment. The Cytoplasmic segment spans residues 299–342 (FFLCKSFRNSLISMLKCPNSATSQSQDNRKKEQDGGDPNEETPM). Positions 317–342 (NSATSQSQDNRKKEQDGGDPNEETPM) are disordered. Residues 333 to 342 (GGDPNEETPM) show a composition bias toward acidic residues.

This sequence belongs to the G-protein coupled receptor 1 family.

It localises to the cell membrane. Its function is as follows. Receptor for ADP and ATP coupled to G-proteins that inhibit the adenylyl cyclase second messenger system. Required for normal platelet aggregation and blood coagulation. The polypeptide is P2Y purinoceptor 12 (P2RY12) (Macaca fascicularis (Crab-eating macaque)).